Reading from the N-terminus, the 504-residue chain is Activin receptor type-1 (504 aa).

An N-terminal signal peptide occupies residues 1–16 (MALPVLLLLLALPSRS). Residues 17–119 (VQDEELKLNE…EAAGYSMETL (103 aa)) are Extracellular-facing. N-linked (GlcNAc...) asparagine glycosylation is present at Asn94. A helical transmembrane segment spans residues 120-140 (IIVILAPVVVLVIFSVVAVLI). Over 141–504 (IRRIQKNHME…NSLDKLKADC (364 aa)) the chain is Cytoplasmic. One can recognise a GS domain in the interval 173 to 202 (STLADLLDHSCTSGSGSGLPFLVQRTVARQ). Positions 203–497 (ITLVECVGKG…KTLTKIDNSL (295 aa)) constitute a Protein kinase domain. Residues 209 to 217 (VGKGRYGEV) and Lys230 each bind ATP. Asp331 serves as the catalytic Proton acceptor.

It belongs to the protein kinase superfamily. TKL Ser/Thr protein kinase family. TGFB receptor subfamily. Mg(2+) is required as a cofactor. Requires Mn(2+) as cofactor.

The protein localises to the membrane. The catalysed reaction is L-threonyl-[receptor-protein] + ATP = O-phospho-L-threonyl-[receptor-protein] + ADP + H(+). It catalyses the reaction L-seryl-[receptor-protein] + ATP = O-phospho-L-seryl-[receptor-protein] + ADP + H(+). Its function is as follows. On ligand binding, forms a receptor complex consisting of two type II and two type I transmembrane serine/threonine kinases. Type II receptors phosphorylate and activate type I receptors which autophosphorylate, then bind and activate SMAD transcriptional regulators. Receptor for activin. In Gallus gallus (Chicken), this protein is Activin receptor type-1 (ACVR1).